The following is a 299-amino-acid chain: Beta-lactamase VEB-1 (299 aa).

Residues 1-23 (MKIVKRILLVLLSLFFTIVYSNA) form the signal peptide. The Nucleophile; acyl-ester intermediate role is filled by Ser68. A beta-lactam-binding residues include Lys71, Ser131, and Glu167. The active-site Proton acceptor is the Glu167.

It belongs to the class-A beta-lactamase family.

The enzyme catalyses a beta-lactam + H2O = a substituted beta-amino acid. With respect to regulation, inhibited by the beta-lactamase-blocking agent clavulanic acid. Functionally, class A beta-lactamase which confers resistance to the beta-lactam antibiotics, including penicillins and cephalosporins, in E.coli strain JM109. Acts via hydrolysis of the beta-lactam ring. Has penicillin-, and cephalosporin-hydrolyzing activities. This Pseudomonas aeruginosa protein is Beta-lactamase VEB-1.